Reading from the N-terminus, the 420-residue chain is MSNGVNAPLARHAMAYVLAGGRGSRLMELTDRRAKPAVYFGGKSRIIDFALSNALNSGIRRIAVATQYKAHSLIRHLQHGWNFFRPERNESFDILPASQRVSEELWYLGTADAVYQNIDIIESYDPQFIVLLAGDHIYKMDYEQMLQQHVEQGADVTVGCLEVPRREASGFGVMAVDADDVIHSFVEKPANPPPMPGKPTMSLASMGIYVFDTKFLFEELRRDAADPNSSHDFGKDIIPYIVKHGKAVAHSFDRSCIRSHAEAASYWRDVGTVDAYWAANIDLCDIVPELDLYDHNWPIWTYGEIVPPAKFVHDKIGRRGEAISSLVSGGCIISGSTLRQTLLFTGVRVHSYSTIEQAVILPYVDVARSCQLTNVVIDRGVRIPEGLVVGEDPELDAARFHRTDAGICLITQPMIDRLEA.

Residues Y107, G172, 187–188, and S205 contribute to the alpha-D-glucose 1-phosphate site; that span reads EK.

Belongs to the bacterial/plant glucose-1-phosphate adenylyltransferase family. Homotetramer.

The enzyme catalyses alpha-D-glucose 1-phosphate + ATP + H(+) = ADP-alpha-D-glucose + diphosphate. Its pathway is glycan biosynthesis; glycogen biosynthesis. Functionally, involved in the biosynthesis of ADP-glucose, a building block required for the elongation reactions to produce glycogen. Catalyzes the reaction between ATP and alpha-D-glucose 1-phosphate (G1P) to produce pyrophosphate and ADP-Glc. The chain is Glucose-1-phosphate adenylyltransferase from Rhodopseudomonas palustris (strain BisB18).